The primary structure comprises 177 residues: Large ribosomal subunit protein uL6 (177 aa).

This sequence belongs to the universal ribosomal protein uL6 family. In terms of assembly, part of the 50S ribosomal subunit.

In terms of biological role, this protein binds to the 23S rRNA, and is important in its secondary structure. It is located near the subunit interface in the base of the L7/L12 stalk, and near the tRNA binding site of the peptidyltransferase center. This Polaromonas naphthalenivorans (strain CJ2) protein is Large ribosomal subunit protein uL6.